The primary structure comprises 628 residues: U-box domain-containing protein 10 (628 aa).

Positions 242-316 constitute a U-box domain; it reads TIPEDFLCPI…SQWCTKHNIE (75 aa). ARM repeat units lie at residues 373 to 413, 415 to 454, 456 to 495, 497 to 537, and 539 to 578; these read TDNR…NLSI, EHNK…SLSL, DENK…NLCI, QGNK…VLAS, and QVAK…CLCK.

The catalysed reaction is S-ubiquitinyl-[E2 ubiquitin-conjugating enzyme]-L-cysteine + [acceptor protein]-L-lysine = [E2 ubiquitin-conjugating enzyme]-L-cysteine + N(6)-ubiquitinyl-[acceptor protein]-L-lysine.. Its pathway is protein modification; protein ubiquitination. Functionally, functions as an E3 ubiquitin ligase. The sequence is that of U-box domain-containing protein 10 (PUB10) from Arabidopsis thaliana (Mouse-ear cress).